The chain runs to 346 residues: Biotin synthase (346 aa).

Residues 41-265 (NEVQISTLLS…MMPHSYVRLS (225 aa)) form the Radical SAM core domain. Residues C56, C60, and C63 each contribute to the [4Fe-4S] cluster site. Residues C100, C131, C191, and R263 each contribute to the [2Fe-2S] cluster site.

This sequence belongs to the radical SAM superfamily. Biotin synthase family. As to quaternary structure, homodimer. [4Fe-4S] cluster serves as cofactor. Requires [2Fe-2S] cluster as cofactor.

The catalysed reaction is (4R,5S)-dethiobiotin + (sulfur carrier)-SH + 2 reduced [2Fe-2S]-[ferredoxin] + 2 S-adenosyl-L-methionine = (sulfur carrier)-H + biotin + 2 5'-deoxyadenosine + 2 L-methionine + 2 oxidized [2Fe-2S]-[ferredoxin]. It participates in cofactor biosynthesis; biotin biosynthesis; biotin from 7,8-diaminononanoate: step 2/2. In terms of biological role, catalyzes the conversion of dethiobiotin (DTB) to biotin by the insertion of a sulfur atom into dethiobiotin via a radical-based mechanism. The chain is Biotin synthase from Pseudoalteromonas translucida (strain TAC 125).